The primary structure comprises 508 residues: Steroid 17-alpha-hydroxylase/17,20 lyase (508 aa).

N202 lines the substrate pocket. C442 is a binding site for heme.

This sequence belongs to the cytochrome P450 family. Requires heme as cofactor. Phosphorylation is necessary for 17,20-lyase, but not for 17-alpha-hydroxylase activity.

It localises to the endoplasmic reticulum membrane. The protein resides in the microsome membrane. The catalysed reaction is a C21-steroid + reduced [NADPH--hemoprotein reductase] + O2 = a 17alpha-hydroxy-C21-steroid + oxidized [NADPH--hemoprotein reductase] + H2O + H(+). It catalyses the reaction progesterone + reduced [NADPH--hemoprotein reductase] + O2 = 17alpha-hydroxyprogesterone + oxidized [NADPH--hemoprotein reductase] + H2O + H(+). It carries out the reaction pregnenolone + reduced [NADPH--hemoprotein reductase] + O2 = 17alpha-hydroxypregnenolone + oxidized [NADPH--hemoprotein reductase] + H2O + H(+). The enzyme catalyses 17alpha-hydroxyprogesterone + reduced [NADPH--hemoprotein reductase] + O2 = androst-4-ene-3,17-dione + acetate + oxidized [NADPH--hemoprotein reductase] + H2O + 2 H(+). The catalysed reaction is 17alpha-hydroxyprogesterone + reduced [NADPH--hemoprotein reductase] + O2 = 16alpha,17alpha-dihydroxyprogesterone + oxidized [NADPH--hemoprotein reductase] + H2O + H(+). It catalyses the reaction 16alpha,17alpha-dihydroxyprogesterone + reduced [NADPH--hemoprotein reductase] + O2 = 6beta,16alpha,17alpha-trihydroxyprogesterone + oxidized [NADPH--hemoprotein reductase] + H2O + H(+). It carries out the reaction 17alpha-hydroxypregnenolone + reduced [NADPH--hemoprotein reductase] + O2 = 3beta-hydroxyandrost-5-en-17-one + acetate + oxidized [NADPH--hemoprotein reductase] + H2O + 2 H(+). The enzyme catalyses 16alpha,17alpha-dihydroxypregnenolone + reduced [NADPH--hemoprotein reductase] + O2 = 3beta,16alpha-dihydroxy-androst-5-en-17-one + acetate + oxidized [NADPH--hemoprotein reductase] + H2O + 2 H(+). The catalysed reaction is 3beta-hydroxyandrost-5-en-17-one + reduced [NADPH--hemoprotein reductase] + O2 = 3beta,16alpha-dihydroxy-androst-5-en-17-one + oxidized [NADPH--hemoprotein reductase] + H2O + H(+). It catalyses the reaction androst-4-ene-3,17-dione + reduced [NADPH--hemoprotein reductase] + O2 = 16alpha-hydroxyandrost-4-ene-3,17-dione + oxidized [NADPH--hemoprotein reductase] + H2O + H(+). Its pathway is steroid hormone biosynthesis. It participates in steroid biosynthesis; glucocorticoid biosynthesis. With respect to regulation, regulated predominantly by intracellular cAMP levels. The 17,20-lyase activity is stimulated by cytochrome b5, which acts as an allosteric effector increasing the Vmax of the lyase activity. Functionally, a cytochrome P450 monooxygenase involved in corticoid and androgen biosynthesis. Catalyzes 17-alpha hydroxylation of C21 steroids, which is common for both pathways. A second oxidative step, required only for androgen synthesis, involves an acyl-carbon cleavage. The 17-alpha hydroxy intermediates, as part of adrenal glucocorticoids biosynthesis pathway, are precursors of cortisol. Hydroxylates steroid hormones, pregnenolone and progesterone to form 17-alpha hydroxy metabolites, followed by the cleavage of the C17-C20 bond to form C19 steroids, dehydroepiandrosterone (DHEA) and androstenedione. Has 16-alpha hydroxylase activity. Catalyzes 16-alpha hydroxylation of 17-alpha hydroxy pregnenolone, followed by the cleavage of the C17-C20 bond to form 16-alpha-hydroxy DHEA. Also 16-alpha hydroxylates androgens, relevant for estriol synthesis. Mechanistically, uses molecular oxygen inserting one oxygen atom into a substrate, and reducing the second into a water molecule, with two electrons provided by NADPH via cytochrome P450 reductase (CPR; NADPH-ferrihemoprotein reductase). In Homo sapiens (Human), this protein is Steroid 17-alpha-hydroxylase/17,20 lyase.